The chain runs to 146 residues: 3-hydroxyacyl-[acyl-carrier-protein] dehydratase FabZ (146 aa).

The active site involves histidine 49.

The protein belongs to the thioester dehydratase family. FabZ subfamily.

The protein resides in the cytoplasm. The enzyme catalyses a (3R)-hydroxyacyl-[ACP] = a (2E)-enoyl-[ACP] + H2O. Its function is as follows. Involved in unsaturated fatty acids biosynthesis. Catalyzes the dehydration of short chain beta-hydroxyacyl-ACPs and long chain saturated and unsaturated beta-hydroxyacyl-ACPs. The polypeptide is 3-hydroxyacyl-[acyl-carrier-protein] dehydratase FabZ (Pseudomonas entomophila (strain L48)).